The primary structure comprises 360 residues: Tyrosine-protein phosphatase non-receptor type 7 (360 aa).

Positions methionine 1–arginine 37 are disordered. An interaction with MAP kinases region spans residues leucine 38–aspartate 51. Serine 44 is subject to Phosphoserine. Residue threonine 66 is modified to Phosphothreonine. Residues serine 93, serine 110, and serine 143 each carry the phosphoserine modification. The region spanning leucine 97 to tyrosine 350 is the Tyrosine-protein phosphatase domain. Substrate-binding positions include aspartate 257, cysteine 291–arginine 297, and glutamine 335. Cysteine 291 functions as the Phosphocysteine intermediate in the catalytic mechanism. Cysteine 291 is subject to Cysteine sulfenic acid (-SOH).

The protein belongs to the protein-tyrosine phosphatase family. Non-receptor class subfamily. As to quaternary structure, monomer. Interacts with MAPK1, MAPK3 and several other MAP kinases. Post-translationally, phosphorylated on serine residues in resting T-cells. Phosphorylation increases upon exposure to stimuli that increase intracellular cAMP levels. Phosphorylation leads to dissociation of bound MAP kinases. Oxidized at active site cysteine. Treatment with pervanadate (vanadate and H(2)O(2)) or with antigen enhanced oxidation of active site cysteine. As to expression, expressed exclusively in thymus and spleen.

The protein localises to the cytoplasm. It localises to the cytoskeleton. The catalysed reaction is O-phospho-L-tyrosyl-[protein] + H2O = L-tyrosyl-[protein] + phosphate. With respect to regulation, inhibited in cells after FCER1A triggering. Its function is as follows. Protein phosphatase that acts preferentially on tyrosine-phosphorylated MAPK1. Plays a role in the regulation of T and B-lymphocyte development and signal transduction. This is Tyrosine-protein phosphatase non-receptor type 7 (PTPN7) from Homo sapiens (Human).